The chain runs to 189 residues: GTP cyclohydrolase 1 (189 aa).

Residues Cys79, His82, and Cys150 each coordinate Zn(2+).

Belongs to the GTP cyclohydrolase I family. Homomer.

It carries out the reaction GTP + H2O = 7,8-dihydroneopterin 3'-triphosphate + formate + H(+). The protein operates within cofactor biosynthesis; 7,8-dihydroneopterin triphosphate biosynthesis; 7,8-dihydroneopterin triphosphate from GTP: step 1/1. This is GTP cyclohydrolase 1 from Rickettsia africae (strain ESF-5).